A 283-amino-acid polypeptide reads, in one-letter code: Elongation factor Ts (283 aa).

Positions 80–83 (TDFV) are involved in Mg(2+) ion dislocation from EF-Tu.

This sequence belongs to the EF-Ts family.

The protein localises to the cytoplasm. Associates with the EF-Tu.GDP complex and induces the exchange of GDP to GTP. It remains bound to the aminoacyl-tRNA.EF-Tu.GTP complex up to the GTP hydrolysis stage on the ribosome. The protein is Elongation factor Ts of Citrobacter koseri (strain ATCC BAA-895 / CDC 4225-83 / SGSC4696).